Here is a 1323-residue protein sequence, read N- to C-terminus: Nck-associated protein 5-like (1323 aa).

6 disordered regions span residues Met1–Glu22, Gln113–Pro142, Gln156–Ala175, Pro204–Pro238, Pro260–Leu314, and Gly341–Glu714. The tract at residues Met1 to Glu135 is mediates interaction with CDK5RAP2 and is required for homodimerization and microtubule bundle formation. A coiled-coil region spans residues Glu22–Asn109. 2 stretches are compositionally biased toward pro residues: residues Gly162–Ala172 and Cys226–Trp236. The span at Ala271 to Ser298 shows a compositional bias: low complexity. Pro residues predominate over residues Pro353 to Pro364. Phosphoserine; by CDK1 is present on residues Ser436, Ser447, Ser466, and Ser473. Residues Ser480 to Pro483 carry the (S/T)X(I/L)P motif 1 motif. Ser489, Ser492, and Ser494 each carry phosphoserine. Polar residues predominate over residues Leu531–Leu542. Position 573 is a phosphoserine; by CDK1 (Ser573). Residues Arg647 to Leu660 show a composition bias toward basic and acidic residues. At Thr654 the chain carries Phosphothreonine. Residues Arg743–Lys1136 are mediates interaction with beta-tubulin and is required for microtubule bundle formation. Position 760 is a phosphoserine; by CDK1 (Ser760). Disordered regions lie at residues Ala778–Ile875, Gly892–Thr948, Ala979–Gln1003, and Lys1027–Gly1323. Low complexity predominate over residues Lys799–Lys817. The short motif at Thr808–Pro811 is the (S/T)X(I/L)P motif 2 element. A (S/T)X(I/L)P motif 3; required for interaction with MAPRE1 motif is present at residues Ser918–Pro921. The span at Arg925–Asp934 shows a compositional bias: basic and acidic residues. Residues Leu942–Arg985 are a coiled coil. The span at Lys1027–Tyr1041 shows a compositional bias: basic and acidic residues. 2 stretches are compositionally biased toward polar residues: residues Val1097–Leu1112 and His1124–Lys1136. Positions Asp1143–Pro1153 are enriched in pro residues. Phosphoserine is present on Ser1184. 2 stretches are compositionally biased toward polar residues: residues Thr1225–Asp1237 and Val1264–Gln1273. Over residues Leu1302–Gly1323 the composition is skewed to low complexity.

As to quaternary structure, homodimer. Interacts with CDK5RAP2. Interacts with MAPRE1. Interacts with beta-tubulin. Post-translationally, CDK1/Cyclin B-dependent phosphorylation mediates its dissociation from centrosomes during mitosis.

It localises to the cytoplasm. It is found in the cytoskeleton. Its subcellular location is the microtubule organizing center. The protein localises to the centrosome. In terms of biological role, regulates microtubule organization and stabilization. Promotes microtubule growth and bundling formation and stabilizes microtubules by increasing intense acetylation of microtubules. Both tubulin-binding and homodimer formation are required for NCKAP5L-mediated microtubule bundle formation. The protein is Nck-associated protein 5-like (Nckap5l) of Mus musculus (Mouse).